Reading from the N-terminus, the 712-residue chain is Polyribonucleotide nucleotidyltransferase (712 aa).

2 residues coordinate Mg(2+): Asp487 and Asp493. Residues 554-613 form the KH domain; it reads PKIITMTINPDKIRDVIGPSGKQINKIIEETGVKIDIEQDGTVFISSINQEMNDKAKKII. In terms of domain architecture, S1 motif spans 623-691; the sequence is GEIYEGKVKR…KQGRVNLSRK (69 aa).

The protein belongs to the polyribonucleotide nucleotidyltransferase family. Mg(2+) serves as cofactor.

The protein localises to the cytoplasm. The catalysed reaction is RNA(n+1) + phosphate = RNA(n) + a ribonucleoside 5'-diphosphate. Its function is as follows. Involved in mRNA degradation. Catalyzes the phosphorolysis of single-stranded polyribonucleotides processively in the 3'- to 5'-direction. This Bacillus cereus (strain 03BB102) protein is Polyribonucleotide nucleotidyltransferase.